A 300-amino-acid polypeptide reads, in one-letter code: GTPase Era (300 aa).

The Era-type G domain occupies 4 to 173 (KYGIVAIVGK…INTIKNYLHK (170 aa)). A G1 region spans residues 12–19 (GKPNVGKS). 12 to 19 (GKPNVGKS) is a GTP binding site. Positions 38–42 (QTTRN) are G2. The G3 stretch occupies residues 59 to 62 (DTPG). GTP is bound by residues 59 to 63 (DTPGF) and 122 to 125 (SKAE). The G4 stretch occupies residues 122-125 (SKAE). Residues 152-154 (ISA) form a G5 region. Residues 204–282 (LNHEVPHGVG…SLTIFVKVEN (79 aa)) form the KH type-2 domain.

Belongs to the TRAFAC class TrmE-Era-EngA-EngB-Septin-like GTPase superfamily. Era GTPase family. In terms of assembly, monomer.

It localises to the cytoplasm. The protein resides in the cell membrane. In terms of biological role, an essential GTPase that binds both GDP and GTP, with rapid nucleotide exchange. Plays a role in 16S rRNA processing and 30S ribosomal subunit biogenesis and possibly also in cell cycle regulation and energy metabolism. The sequence is that of GTPase Era from Ureaplasma parvum serovar 3 (strain ATCC 27815 / 27 / NCTC 11736).